The chain runs to 516 residues: Anaerobic nitric oxide reductase transcription regulator NorR (516 aa).

Position 57 is a 4-aspartylphosphate (D57). The region spanning 187–416 is the Sigma-54 factor interaction domain; it reads IIGLSAPMLQ…LEHAIHRAVV (230 aa). Residues 215 to 222 and 278 to 287 contribute to the ATP site; these read GETGTGKE and ADNGTLFLDE. The segment at residues 482 to 501 is a DNA-binding region (H-T-H motif); the sequence is WAATARALELDVANLHRLAK.

Its pathway is nitrogen metabolism; nitric oxide reduction. Required for the expression of anaerobic nitric oxide (NO) reductase, acts as a transcriptional activator for at least the norVW operon. Activation also requires sigma-54. This Klebsiella pneumoniae (strain 342) protein is Anaerobic nitric oxide reductase transcription regulator NorR.